We begin with the raw amino-acid sequence, 417 residues long: Senescence-associated protein AAF, chloroplastic (417 aa).

The transit peptide at 1–36 (MALNVSKVVPNSPILVKSVNASRSRRVLLAYVHHPL) directs the protein to the chloroplast.

It belongs to the ATA15/OSA15 family. Expressed in leaves. Expressed in 7-day-old seedlings, roots, rosette leaves, cauline leaves and flower buds.

Its subcellular location is the plastid. It is found in the chloroplast. Involved in modulation of redox homeostasis to regulate leaf senescence mediated by age and stress factors during plant development. Its function is dependent of EIN2, a central factor of ethylene signaling. The protein is Senescence-associated protein AAF, chloroplastic of Arabidopsis thaliana (Mouse-ear cress).